A 298-amino-acid chain; its full sequence is Cyclin-dependent kinase 2 (298 aa).

Residues 4-286 enclose the Protein kinase domain; it reads FQKVEKIGEG…AKNALVHRFF (283 aa). Residues 10-18, K33, 81-83, and D86 contribute to the ATP site; these read IGEGTYGVV and EFL. Position 14 is a phosphothreonine (T14). At Y15 the chain carries Phosphotyrosine. The Proton acceptor role is filled by D127. ATP is bound by residues 129-132 and D145; that span reads KPQN. Phosphothreonine; by CAK is present on T160.

This sequence belongs to the protein kinase superfamily. CMGC Ser/Thr protein kinase family. CDC2/CDKX subfamily.

The enzyme catalyses L-seryl-[protein] + ATP = O-phospho-L-seryl-[protein] + ADP + H(+). The catalysed reaction is L-threonyl-[protein] + ATP = O-phospho-L-threonyl-[protein] + ADP + H(+). With respect to regulation, phosphorylation at Thr-14 or Tyr-15 inactivates the enzyme, while phosphorylation at Thr-160 activates it. Its function is as follows. Serine/threonine-protein kinase involved in the control of the cell cycle; essential for meiosis, but dispensable for mitosis. Triggers duplication of centrosomes and DNA. Acts at the G1-S transition to promote the E2F transcriptional program and the initiation of DNA synthesis, and modulates G2 progression; controls the timing of entry into mitosis/meiosis by controlling the subsequent activation of cyclin B/CDK1 by phosphorylation, and coordinates the activation of cyclin B/CDK1 at the centrosome and in the nucleus. Crucial role in orchestrating a fine balance between cellular proliferation, cell death, and DNA repair in embryonic stem cells (ESCs). Activity of CDK2 is maximal during S phase and G2; activated by interaction with cyclin E during the early stages of DNA synthesis to permit G1-S transition, and subsequently activated by cyclin A2 (cyclin A1 in germ cells) during the late stages of DNA replication to drive the transition from S phase to mitosis, the G2 phase. The chain is Cyclin-dependent kinase 2 (cdk2) from Carassius auratus (Goldfish).